The chain runs to 893 residues: Major vault protein (893 aa).

Alanine 2 carries the post-translational modification N-acetylalanine. MVP repeat units follow at residues alanine 2–arginine 56, histidine 57–proline 111, leucine 112–glutamine 164, alanine 165–aspartate 217, alanine 218–proline 272, isoleucine 273–valine 323, tyrosine 324–alanine 379, isoleucine 380–valine 457, and valine 458–proline 520. Lysine 444 participates in a covalent cross-link: Glycyl lysine isopeptide (Lys-Gly) (interchain with G-Cter in SUMO2). Phosphoserine is present on serine 445. Lysine 704 participates in a covalent cross-link: Glycyl lysine isopeptide (Lys-Gly) (interchain with G-Cter in SUMO2). The segment at glutamine 856–arginine 893 is disordered.

In terms of assembly, the vault ribonucleoprotein particle is a huge (400 A x 670 A) cage structure of 12.9 MDa. It consists of a dimer of half-vaults, with each half-vault comprising 39 identical major vault protein (MVP) chains, PARP4 and one or more vault RNAs (vRNAs). Interacts with TEP1. Interacts with PTEN and activated MAPK1. The phosphorylated protein interacts with the SH2 domains of PTPN11 and SRC. Interacts with APEX1. May interact with ZNF540. Phosphorylated on Tyr residues after EGF stimulation. In terms of processing, dephosphorylated by PTPN11. Present in most normal tissues. Higher expression observed in epithelial cells with secretory and excretory functions, as well as in cells chronically exposed to xenobiotics, such as bronchial cells and cells lining the intestine. Overexpressed in many multidrug-resistant cancer cells.

The protein resides in the cytoplasm. The protein localises to the nucleus. It is found in the nuclear pore complex. It localises to the perinuclear region. In terms of biological role, required for normal vault structure. Vaults are multi-subunit structures that may act as scaffolds for proteins involved in signal transduction. Vaults may also play a role in nucleo-cytoplasmic transport. Down-regulates IFNG-mediated STAT1 signaling and subsequent activation of JAK. Down-regulates SRC activity and signaling through MAP kinases. This is Major vault protein (MVP) from Homo sapiens (Human).